The chain runs to 727 residues: Phosphoribosylformylglycinamidine synthase subunit PurL (727 aa).

His47 is an active-site residue. Tyr50 and Lys89 together coordinate ATP. Glu91 is a binding site for Mg(2+). Residues Ser92–His95 and Arg114 contribute to the substrate site. His93 functions as the Proton acceptor in the catalytic mechanism. Asp115 contributes to the Mg(2+) binding site. Gln238 provides a ligand contact to substrate. Asp266 serves as a coordination point for Mg(2+). Residue Glu310–Gln312 participates in substrate binding. The ATP site is built by Asp490 and Gly527. Asn528 contacts Mg(2+). Ser530 provides a ligand contact to substrate.

It belongs to the FGAMS family. In terms of assembly, monomer. Part of the FGAM synthase complex composed of 1 PurL, 1 PurQ and 2 PurS subunits.

It localises to the cytoplasm. It carries out the reaction N(2)-formyl-N(1)-(5-phospho-beta-D-ribosyl)glycinamide + L-glutamine + ATP + H2O = 2-formamido-N(1)-(5-O-phospho-beta-D-ribosyl)acetamidine + L-glutamate + ADP + phosphate + H(+). It functions in the pathway purine metabolism; IMP biosynthesis via de novo pathway; 5-amino-1-(5-phospho-D-ribosyl)imidazole from N(2)-formyl-N(1)-(5-phospho-D-ribosyl)glycinamide: step 1/2. Part of the phosphoribosylformylglycinamidine synthase complex involved in the purines biosynthetic pathway. Catalyzes the ATP-dependent conversion of formylglycinamide ribonucleotide (FGAR) and glutamine to yield formylglycinamidine ribonucleotide (FGAM) and glutamate. The FGAM synthase complex is composed of three subunits. PurQ produces an ammonia molecule by converting glutamine to glutamate. PurL transfers the ammonia molecule to FGAR to form FGAM in an ATP-dependent manner. PurS interacts with PurQ and PurL and is thought to assist in the transfer of the ammonia molecule from PurQ to PurL. This chain is Phosphoribosylformylglycinamidine synthase subunit PurL, found in Acidiphilium cryptum (strain JF-5).